The chain runs to 460 residues: WD repeat-containing protein 41 (460 aa).

WD repeat units follow at residues 40-79, 82-128, 131-168, 220-258, 321-359, and 403-441; these read EAHR…KLLE, GHTQ…QIQR, CFQS…LCKT, DHQD…VQAC, AHDS…QLAA, and GHSS…SGVR.

As to quaternary structure, component of the C9orf72-SMCR8 complex, at least composed of C9orf72, SMCR8 and WDR41. The complex is formed of two protomers, each individually consisting of one molecule each of C9orf72, SMCR8 and WDR41. The protomers homodimerize via an interaction between C9orf72 (via C-terminus) and SMCR8 (via N-terminus). Within each protomer SMCR8 (via DENN domain) acts as a bridging protein between WDR41 (via C-terminus and N-terminus) and C9orf72 (via C-terminus). The C9orf72-SMCR8 complex associates with the ULK1/ATG1 kinase complex.

The protein resides in the cytoplasm. In terms of biological role, non-catalytic component of the C9orf72-SMCR8 complex, a complex that has guanine nucleotide exchange factor (GEF) activity and regulates autophagy. The C9orf72-SMCR8 complex promotes the exchange of GDP to GTP, converting inactive GDP-bound RAB8A and RAB39B into their active GTP-bound form, thereby promoting autophagosome maturation. As part of the C9orf72-SMCR8 complex, stimulates RAB8A and RAB11A GTPase activity in vitro, however WDR42 is shown not be an essential complex component for this function. The C9orf72-SMCR8 complex also acts as a negative regulator of autophagy initiation by interacting with the ULK1/ATG1 kinase complex and inhibiting its protein kinase activity. This is WD repeat-containing protein 41 from Mus musculus (Mouse).